The primary structure comprises 153 residues: uncharacterized protein (153 aa).

2 disordered regions span residues 30–66 and 79–153; these read GPTV…RKGD and IKEN…DYDD. The span at 45–56 shows a compositional bias: acidic residues; the sequence is EDSDGSDKEDEQ. Composition is skewed to polar residues over residues 106–116 and 130–144; these read GDTTSGVNACS and GTKS…SSLL.

This is an uncharacterized protein from Xenopus laevis (African clawed frog).